The sequence spans 431 residues: MEFENLTKEEMEQLQKIYDDTISFERKIGIIIPTIFAVIILVGLVGNALVVIVAFGRQMRNSTNTLIIGLAISDLMFLLLCVPFTAVDYAAPTWIFPEWTCSMINFFQHTSAYCSVWTLTLMALDRYLAVVYPVESMTLRTPRNTVIALCFIYIIIIASQIPVGRMHGIYVYDFIMEKRSTCAILTIATAEATPTMARTYFMTFNVFGYVLPLGISVVLYGLMLRKLWDMPRPGNSQSVGGRNLTNRDSGSSIRRRPEATAAKRKVTRLVLCVLITWALCWLPLNVCFFMSGLAYPEPLVISHGVIMVIVQIASQVLAYTNSCLNPILYALMSQSFREGFIRVMKMLINKLSRGRFCTNYRRSALRTELTHYNQTPAHPANTVVQVSNGERSSLLKDNSSSATSVQPLRTSIQAKKTKNIGRSKSTRSYNL.

Topologically, residues 1 to 34 (MEFENLTKEEMEQLQKIYDDTISFERKIGIIIPT) are extracellular. The N-linked (GlcNAc...) asparagine glycan is linked to N5. The helical transmembrane segment at 35 to 55 (IFAVIILVGLVGNALVVIVAF) threads the bilayer. Over 56–66 (GRQMRNSTNTL) the chain is Cytoplasmic. A helical transmembrane segment spans residues 67-87 (IIGLAISDLMFLLLCVPFTAV). Topologically, residues 88–101 (DYAAPTWIFPEWTC) are extracellular. An intrachain disulfide couples C101 to C182. The helical transmembrane segment at 102-124 (SMINFFQHTSAYCSVWTLTLMAL) threads the bilayer. Residues 125-143 (DRYLAVVYPVESMTLRTPR) are Cytoplasmic-facing. A helical transmembrane segment spans residues 144–164 (NTVIALCFIYIIIIASQIPVG). Over 165–203 (RMHGIYVYDFIMEKRSTCAILTIATAEATPTMARTYFMT) the chain is Extracellular. The helical transmembrane segment at 204–224 (FNVFGYVLPLGISVVLYGLML) threads the bilayer. Topologically, residues 225-268 (RKLWDMPRPGNSQSVGGRNLTNRDSGSSIRRRPEATAAKRKVTR) are cytoplasmic. A compositionally biased stretch (polar residues) spans 235–252 (NSQSVGGRNLTNRDSGSS). The disordered stretch occupies residues 235–257 (NSQSVGGRNLTNRDSGSSIRRRP). The chain crosses the membrane as a helical span at residues 269-289 (LVLCVLITWALCWLPLNVCFF). Topologically, residues 290–298 (MSGLAYPEP) are extracellular. Residues 299-319 (LVISHGVIMVIVQIASQVLAY) traverse the membrane as a helical segment. Over 320-431 (TNSCLNPILY…RSKSTRSYNL (112 aa)) the chain is Cytoplasmic. Over residues 393–414 (SLLKDNSSSATSVQPLRTSIQA) the composition is skewed to polar residues. The interval 393–431 (SLLKDNSSSATSVQPLRTSIQAKKTKNIGRSKSTRSYNL) is disordered. Basic residues predominate over residues 415-425 (KKTKNIGRSKS).

The protein belongs to the G-protein coupled receptor 1 family. Exclusively expressed in the AIB interneuron.

It is found in the cell membrane. Its function is as follows. Neuropeptide that controls movement such as roaming, foraging and backwards locomotion or 'reversals' in response to environmental cues such as food availability or volatile odorants such as octanol. Antagonizes AIB interneuron activity to control bacterial colonization and may negatively regulate the expression of immunity-related genes such as pqm-1 and dod-22 in response to infection by P.aeruginosa. The protein is Galanin-like G-protein coupled receptor npr-9 of Caenorhabditis elegans.